A 255-amino-acid chain; its full sequence is tRNA pseudouridine synthase A (255 aa).

Catalysis depends on Asp-52, which acts as the Nucleophile. Residue Tyr-111 participates in substrate binding.

It belongs to the tRNA pseudouridine synthase TruA family. As to quaternary structure, homodimer.

It carries out the reaction uridine(38/39/40) in tRNA = pseudouridine(38/39/40) in tRNA. In terms of biological role, formation of pseudouridine at positions 38, 39 and 40 in the anticodon stem and loop of transfer RNAs. This is tRNA pseudouridine synthase A from Nitrobacter winogradskyi (strain ATCC 25391 / DSM 10237 / CIP 104748 / NCIMB 11846 / Nb-255).